The primary structure comprises 763 residues: Phosphoglycerol transferase I (763 aa).

The next 4 helical transmembrane spans lie at Met-1 to Ala-21, Trp-26 to Phe-46, Ile-77 to Ile-97, and Phe-108 to Phe-128.

This sequence belongs to the OpgB family.

The protein resides in the cell inner membrane. The catalysed reaction is a phosphatidylglycerol + a membrane-derived-oligosaccharide D-glucose = a 1,2-diacyl-sn-glycerol + a membrane-derived-oligosaccharide 6-(glycerophospho)-D-glucose.. Its pathway is glycan metabolism; osmoregulated periplasmic glucan (OPG) biosynthesis. Functionally, transfers a phosphoglycerol residue from phosphatidylglycerol to the membrane-bound nascent glucan backbones. The sequence is that of Phosphoglycerol transferase I from Escherichia coli (strain SE11).